The sequence spans 91 residues: CRISPR-associated endoribonuclease Cas2 2 (91 aa).

Position 8 (Asp8) interacts with Mg(2+).

The protein belongs to the CRISPR-associated endoribonuclease Cas2 protein family. As to quaternary structure, homodimer, forms a heterotetramer with a Cas1 homodimer. Mg(2+) serves as cofactor.

In terms of biological role, CRISPR (clustered regularly interspaced short palindromic repeat), is an adaptive immune system that provides protection against mobile genetic elements (viruses, transposable elements and conjugative plasmids). CRISPR clusters contain sequences complementary to antecedent mobile elements and target invading nucleic acids. CRISPR clusters are transcribed and processed into CRISPR RNA (crRNA). Functions as a ssRNA-specific endoribonuclease. Involved in the integration of spacer DNA into the CRISPR cassette. The polypeptide is CRISPR-associated endoribonuclease Cas2 2 (Pyrobaculum aerophilum (strain ATCC 51768 / DSM 7523 / JCM 9630 / CIP 104966 / NBRC 100827 / IM2)).